The sequence spans 88 residues: Small ribosomal subunit protein uS19 (88 aa).

It belongs to the universal ribosomal protein uS19 family.

Protein S19 forms a complex with S13 that binds strongly to the 16S ribosomal RNA. This chain is Small ribosomal subunit protein uS19, found in Ureaplasma parvum serovar 3 (strain ATCC 27815 / 27 / NCTC 11736).